Consider the following 416-residue polypeptide: Glutamyl-tRNA reductase (416 aa).

Substrate is bound by residues Thr-50–Arg-53, Ser-109, Glu-114–Gln-116, and Gln-120. Catalysis depends on Cys-51, which acts as the Nucleophile. Gly-189–Ile-194 contributes to the NADP(+) binding site.

The protein belongs to the glutamyl-tRNA reductase family. In terms of assembly, homodimer.

It carries out the reaction (S)-4-amino-5-oxopentanoate + tRNA(Glu) + NADP(+) = L-glutamyl-tRNA(Glu) + NADPH + H(+). Its pathway is porphyrin-containing compound metabolism; protoporphyrin-IX biosynthesis; 5-aminolevulinate from L-glutamyl-tRNA(Glu): step 1/2. In terms of biological role, catalyzes the NADPH-dependent reduction of glutamyl-tRNA(Glu) to glutamate 1-semialdehyde (GSA). The chain is Glutamyl-tRNA reductase from Ruthia magnifica subsp. Calyptogena magnifica.